Reading from the N-terminus, the 297-residue chain is Acetylglutamate kinase (297 aa).

Substrate contacts are provided by residues 68–69 (GG), R90, and N195.

This sequence belongs to the acetylglutamate kinase family. ArgB subfamily.

It is found in the cytoplasm. The enzyme catalyses N-acetyl-L-glutamate + ATP = N-acetyl-L-glutamyl 5-phosphate + ADP. It functions in the pathway amino-acid biosynthesis; L-arginine biosynthesis; N(2)-acetyl-L-ornithine from L-glutamate: step 2/4. In terms of biological role, catalyzes the ATP-dependent phosphorylation of N-acetyl-L-glutamate. The chain is Acetylglutamate kinase from Mesorhizobium japonicum (strain LMG 29417 / CECT 9101 / MAFF 303099) (Mesorhizobium loti (strain MAFF 303099)).